We begin with the raw amino-acid sequence, 183 residues long: Ribosome-recycling factor (183 aa).

It belongs to the RRF family.

It localises to the cytoplasm. Functionally, responsible for the release of ribosomes from messenger RNA at the termination of protein biosynthesis. May increase the efficiency of translation by recycling ribosomes from one round of translation to another. This chain is Ribosome-recycling factor, found in Clostridium tetani (strain Massachusetts / E88).